We begin with the raw amino-acid sequence, 83 residues long: Homeobox protein DLX-2 (83 aa).

Residues S1 to H14 are compositionally biased toward polar residues. Disordered regions lie at residues S1–A27 and P63–E83.

This sequence belongs to the distal-less homeobox family. In terms of assembly, interacts (via homeobox DNA-binding domain) with POU4F2; this interaction enhances retinal ganglion cell (RGC) differentiation.

Its subcellular location is the nucleus. In terms of biological role, acts as a transcriptional activator. Activates transcription of CGA/alpha-GSU, via binding to the downstream activin regulatory element (DARE) in the gene promoter. Plays a role in terminal differentiation of interneurons, such as amacrine and bipolar cells in the developing retina. Likely to play a regulatory role in the development of the ventral forebrain. May play a role in craniofacial patterning and morphogenesis. The chain is Homeobox protein DLX-2 (Dlx2) from Rattus norvegicus (Rat).